We begin with the raw amino-acid sequence, 260 residues long: Exosome complex component Rrp42 (260 aa).

This sequence belongs to the RNase PH family. Rrp42 subfamily. In terms of assembly, component of the archaeal exosome complex. Forms a hexameric ring-like arrangement composed of 3 Rrp41-Rrp42 heterodimers. The hexameric ring associates with a trimer of Rrp4 and/or Csl4 subunits.

It is found in the cytoplasm. Functionally, non-catalytic component of the exosome, which is a complex involved in RNA degradation. Contributes to the structuring of the Rrp41 active site. The polypeptide is Exosome complex component Rrp42 (Thermoplasma volcanium (strain ATCC 51530 / DSM 4299 / JCM 9571 / NBRC 15438 / GSS1)).